Here is a 575-residue protein sequence, read N- to C-terminus: Proline--tRNA ligase, cytoplasmic (575 aa).

The protein belongs to the class-II aminoacyl-tRNA synthetase family.

The protein resides in the cytoplasm. The enzyme catalyses tRNA(Pro) + L-proline + ATP = L-prolyl-tRNA(Pro) + AMP + diphosphate. This is Proline--tRNA ligase, cytoplasmic (PRS) from Candida albicans (Yeast).